Reading from the N-terminus, the 433-residue chain is Putative purine permease YbbY (433 aa).

At 1-17 the chain is on the periplasmic side; the sequence is MFNFAVSRESLLSGFQW. The chain crosses the membrane as a helical span at residues 18-38; it reads FFFIFCNTVVVPPTLLSAFQL. The Cytoplasmic segment spans residues 39-42; sequence PQSS. Residues 43-63 form a helical membrane-spanning segment; sequence LLTLTQYAFLATALACFAQAF. At 64-68 the chain is on the periplasmic side; that stretch reads CGHRR. A helical membrane pass occupies residues 69 to 89; sequence AIMEGPGGLWWGTILTITLGE. The Cytoplasmic segment spans residues 90 to 102; that stretch reads ASRGTPINDIATS. The helical transmembrane segment at 103–123 threads the bilayer; the sequence is LAVGIALSGVLTMLIGFSGLG. Over 124-130 the chain is Periplasmic; that stretch reads HRLARLF. Residues 131 to 151 form a helical membrane-spanning segment; it reads TPSVMVLFMLMLGAQLTTIFF. Residues 152-169 lie on the Cytoplasmic side of the membrane; sequence KGMLGLPFGIADPNFKIQ. The helical transmembrane segment at 170-190 threads the bilayer; sequence LPPFALSVAVMCLVLAMIIFL. Residues 191 to 196 lie on the Periplasmic side of the membrane; it reads PQRFAR. Residues 197 to 217 traverse the membrane as a helical segment; it reads YGLLVGTITGWLLWYFCFPSS. Topologically, residues 218–230 are cytoplasmic; sequence HSLSGELHWQWFP. Residues 231–251 form a helical membrane-spanning segment; that stretch reads LGSGGALSPGIILTAVITGLV. At 252–288 the chain is on the periplasmic side; that stretch reads NISNTYGAIRGTDVFYPQQGAGNTRYRRSFVATGFMT. The helical transmembrane segment at 289-309 threads the bilayer; sequence LITVPLAVIPFSPFVSSIGLL. Topologically, residues 310–319 are cytoplasmic; it reads TQTGDYTRRS. A helical transmembrane segment spans residues 320–340; it reads FIYGSVICLLVALVPALTRLF. Over 341 to 345 the chain is Periplasmic; the sequence is CSIPL. The chain crosses the membrane as a helical span at residues 346–366; that stretch reads PVSSAVMLVSYLPLLFSALVF. Over 367–379 the chain is Cytoplasmic; the sequence is SQQITFTARNIYR. A helical transmembrane segment spans residues 380 to 400; it reads LALPLFVGIFLMALPPVYLQD. Topologically, residues 401–407 are periplasmic; that stretch reads LPLTLRP. Residues 408–428 traverse the membrane as a helical segment; sequence LLSNGLLVGILLAVLMDNLIP. Topologically, residues 429–433 are cytoplasmic; that stretch reads WERIE.

Belongs to the nucleobase:cation symporter-2 (NCS2) (TC 2.A.40) family.

The protein resides in the cell inner membrane. The chain is Putative purine permease YbbY (ybbY) from Escherichia coli (strain K12).